Reading from the N-terminus, the 134-residue chain is Holo-[acyl-carrier-protein] synthase (134 aa).

Residues D8 and E57 each coordinate Mg(2+).

Belongs to the P-Pant transferase superfamily. AcpS family. Mg(2+) serves as cofactor.

It localises to the cytoplasm. The enzyme catalyses apo-[ACP] + CoA = holo-[ACP] + adenosine 3',5'-bisphosphate + H(+). In terms of biological role, transfers the 4'-phosphopantetheine moiety from coenzyme A to a Ser of acyl-carrier-protein. The polypeptide is Holo-[acyl-carrier-protein] synthase (Roseobacter denitrificans (strain ATCC 33942 / OCh 114) (Erythrobacter sp. (strain OCh 114))).